The following is a 582-amino-acid chain: Putative BTB/POZ domain-containing protein At3g08660 (582 aa).

Residues Met1–Ser21 form a disordered region. The region spanning Gly36–Ala103 is the BTB domain. In terms of domain architecture, NPH3 spans Glu196–Arg466. Tyr407 carries the phosphotyrosine modification. A disordered region spans residues Gly558–Arg582. Over residues Ser571–Arg582 the composition is skewed to basic and acidic residues.

Belongs to the NPH3 family.

It functions in the pathway protein modification; protein ubiquitination. In terms of biological role, may act as a substrate-specific adapter of an E3 ubiquitin-protein ligase complex (CUL3-RBX1-BTB) which mediates the ubiquitination and subsequent proteasomal degradation of target proteins. The polypeptide is Putative BTB/POZ domain-containing protein At3g08660 (Arabidopsis thaliana (Mouse-ear cress)).